We begin with the raw amino-acid sequence, 701 residues long: Ribosomal RNA large subunit methyltransferase K/L (701 aa).

Residues 43–154 (LLYQSLMWSR…KETAHISLDL (112 aa)) form the THUMP domain.

It belongs to the methyltransferase superfamily. RlmKL family.

The protein localises to the cytoplasm. It carries out the reaction guanosine(2445) in 23S rRNA + S-adenosyl-L-methionine = N(2)-methylguanosine(2445) in 23S rRNA + S-adenosyl-L-homocysteine + H(+). It catalyses the reaction guanosine(2069) in 23S rRNA + S-adenosyl-L-methionine = N(2)-methylguanosine(2069) in 23S rRNA + S-adenosyl-L-homocysteine + H(+). Functionally, specifically methylates the guanine in position 2445 (m2G2445) and the guanine in position 2069 (m7G2069) of 23S rRNA. The protein is Ribosomal RNA large subunit methyltransferase K/L of Klebsiella pneumoniae (strain 342).